Here is a 372-residue protein sequence, read N- to C-terminus: Putative glutamate--cysteine ligase 2 (372 aa).

Belongs to the glutamate--cysteine ligase type 2 family. YbdK subfamily.

It catalyses the reaction L-cysteine + L-glutamate + ATP = gamma-L-glutamyl-L-cysteine + ADP + phosphate + H(+). Its function is as follows. ATP-dependent carboxylate-amine ligase which exhibits weak glutamate--cysteine ligase activity. The polypeptide is Putative glutamate--cysteine ligase 2 (Cupriavidus metallidurans (strain ATCC 43123 / DSM 2839 / NBRC 102507 / CH34) (Ralstonia metallidurans)).